A 209-amino-acid chain; its full sequence is Small ribosomal subunit protein uS4 (209 aa).

In terms of domain architecture, S4 RNA-binding spans T98–L161.

The protein belongs to the universal ribosomal protein uS4 family. In terms of assembly, part of the 30S ribosomal subunit. Contacts protein S5. The interaction surface between S4 and S5 is involved in control of translational fidelity.

Functionally, one of the primary rRNA binding proteins, it binds directly to 16S rRNA where it nucleates assembly of the body of the 30S subunit. In terms of biological role, with S5 and S12 plays an important role in translational accuracy. The sequence is that of Small ribosomal subunit protein uS4 from Stenotrophomonas maltophilia (strain R551-3).